A 547-amino-acid chain; its full sequence is Calcium-dependent protein kinase 16 (547 aa).

Residues M1 to K53 are disordered. G2 is lipidated: N-myristoyl glycine. Over residues N37–G49 the composition is skewed to gly residues. The 259-residue stretch at Y73 to L331 folds into the Protein kinase domain. ATP is bound by residues L79–T87 and K102. Catalysis depends on D197, which acts as the Proton acceptor. Residues A337 to I367 are autoinhibitory domain. EF-hand domains follow at residues E374–H409, L410–M445, A446–T481, and D482–W517. 17 residues coordinate Ca(2+): D387, D389, D391, E398, D423, N425, E434, D459, D461, N463, Y465, E470, D495, D497, D499, K501, and E506.

This sequence belongs to the protein kinase superfamily. Ser/Thr protein kinase family. CDPK subfamily.

The protein localises to the membrane. It carries out the reaction L-seryl-[protein] + ATP = O-phospho-L-seryl-[protein] + ADP + H(+). The enzyme catalyses L-threonyl-[protein] + ATP = O-phospho-L-threonyl-[protein] + ADP + H(+). Its activity is regulated as follows. Activated by calcium. Autophosphorylation may play an important role in the regulation of the kinase activity. May play a role in signal transduction pathways that involve calcium as a second messenger. The chain is Calcium-dependent protein kinase 16 from Oryza sativa subsp. japonica (Rice).